Reading from the N-terminus, the 227-residue chain is Cytochrome c oxidase subunit 2 (227 aa).

The Mitochondrial intermembrane segment spans residues 1-14 (MAYPFQLGFQDATS). Residues 15-45 (PIMEELLHFHDHTLMIVFLISSLVLYIISLM) form a helical membrane-spanning segment. Residues 46 to 59 (LTTKLTHTSTMDAQ) are Mitochondrial matrix-facing. A helical transmembrane segment spans residues 60 to 87 (EVETIWTILPAIILILIALPSLRILYMM). At 88–227 (DEINNPSLTV…HFEKWSASML (140 aa)) the chain is on the mitochondrial intermembrane side. Cu cation-binding residues include histidine 161, cysteine 196, glutamate 198, cysteine 200, histidine 204, and methionine 207. A Mg(2+)-binding site is contributed by glutamate 198.

It belongs to the cytochrome c oxidase subunit 2 family. Component of the cytochrome c oxidase (complex IV, CIV), a multisubunit enzyme composed of 14 subunits. The complex is composed of a catalytic core of 3 subunits MT-CO1, MT-CO2 and MT-CO3, encoded in the mitochondrial DNA, and 11 supernumerary subunits COX4I, COX5A, COX5B, COX6A, COX6B, COX6C, COX7A, COX7B, COX7C, COX8 and NDUFA4, which are encoded in the nuclear genome. The complex exists as a monomer or a dimer and forms supercomplexes (SCs) in the inner mitochondrial membrane with NADH-ubiquinone oxidoreductase (complex I, CI) and ubiquinol-cytochrome c oxidoreductase (cytochrome b-c1 complex, complex III, CIII), resulting in different assemblies (supercomplex SCI(1)III(2)IV(1) and megacomplex MCI(2)III(2)IV(2)). Found in a complex with TMEM177, COA6, COX18, COX20, SCO1 and SCO2. Interacts with TMEM177 in a COX20-dependent manner. Interacts with COX20. Interacts with COX16. It depends on Cu cation as a cofactor.

The protein resides in the mitochondrion inner membrane. The enzyme catalyses 4 Fe(II)-[cytochrome c] + O2 + 8 H(+)(in) = 4 Fe(III)-[cytochrome c] + 2 H2O + 4 H(+)(out). Component of the cytochrome c oxidase, the last enzyme in the mitochondrial electron transport chain which drives oxidative phosphorylation. The respiratory chain contains 3 multisubunit complexes succinate dehydrogenase (complex II, CII), ubiquinol-cytochrome c oxidoreductase (cytochrome b-c1 complex, complex III, CIII) and cytochrome c oxidase (complex IV, CIV), that cooperate to transfer electrons derived from NADH and succinate to molecular oxygen, creating an electrochemical gradient over the inner membrane that drives transmembrane transport and the ATP synthase. Cytochrome c oxidase is the component of the respiratory chain that catalyzes the reduction of oxygen to water. Electrons originating from reduced cytochrome c in the intermembrane space (IMS) are transferred via the dinuclear copper A center (CU(A)) of subunit 2 and heme A of subunit 1 to the active site in subunit 1, a binuclear center (BNC) formed by heme A3 and copper B (CU(B)). The BNC reduces molecular oxygen to 2 water molecules using 4 electrons from cytochrome c in the IMS and 4 protons from the mitochondrial matrix. In Ceratotherium simum (White rhinoceros), this protein is Cytochrome c oxidase subunit 2 (MT-CO2).